The sequence spans 406 residues: Peptidase T (406 aa).

His-82 is a Zn(2+) binding site. Asp-84 is an active-site residue. Zn(2+) is bound at residue Asp-142. Glu-176 acts as the Proton acceptor in catalysis. Zn(2+)-binding residues include Glu-177, Asp-199, and His-381.

This sequence belongs to the peptidase M20B family. The cofactor is Zn(2+).

It localises to the cytoplasm. It catalyses the reaction Release of the N-terminal residue from a tripeptide.. Its function is as follows. Cleaves the N-terminal amino acid of tripeptides. The sequence is that of Peptidase T from Streptococcus agalactiae serotype III (strain NEM316).